A 173-amino-acid polypeptide reads, in one-letter code: Nascent polypeptide-associated complex subunit alpha (173 aa).

Positions 21–85 (VVHAEKAQKL…VTVEDMAAQA (65 aa)) constitute an NAC-A/B domain. Residues 89 to 117 (NESQKQATETKEEAAITEESGDAQPADTA) form a disordered region. Phosphoserine is present on Ser-122. In terms of domain architecture, UBA spans 134-171 (VDAKDIELVMAQANVSRAKAVTALKENNSDVVNAIMSL).

This sequence belongs to the NAC-alpha family. In terms of assembly, part of the nascent polypeptide-associated complex (NAC), consisting of ucp15 and btf3. NAC associates with ribosomes via btf3.

It localises to the cytoplasm. Its subcellular location is the nucleus. Component of the nascent polypeptide-associated complex (NAC), a dynamic component of the ribosomal exit tunnel, protecting the emerging polypeptides from interaction with other cytoplasmic proteins to ensure appropriate nascent protein targeting. The NAC complex also promotes mitochondrial protein import by enhancing productive ribosome interactions with the outer mitochondrial membrane and blocks the inappropriate interaction of ribosomes translating non-secretory nascent polypeptides with translocation sites in the membrane of the endoplasmic reticulum. Ucp15 may also be involved in transcription regulation. The sequence is that of Nascent polypeptide-associated complex subunit alpha (egd2) from Schizosaccharomyces pombe (strain 972 / ATCC 24843) (Fission yeast).